The primary structure comprises 105 residues: Phosphoribosyl-ATP pyrophosphatase (105 aa).

The protein belongs to the PRA-PH family.

Its subcellular location is the cytoplasm. It carries out the reaction 1-(5-phospho-beta-D-ribosyl)-ATP + H2O = 1-(5-phospho-beta-D-ribosyl)-5'-AMP + diphosphate + H(+). It participates in amino-acid biosynthesis; L-histidine biosynthesis; L-histidine from 5-phospho-alpha-D-ribose 1-diphosphate: step 2/9. This is Phosphoribosyl-ATP pyrophosphatase from Methylococcus capsulatus (strain ATCC 33009 / NCIMB 11132 / Bath).